A 529-amino-acid chain; its full sequence is E3 ubiquitin-protein ligase arih1 (529 aa).

Disordered stretches follow at residues 1–29 (MDSD…HEDE) and 46–69 (ERAG…EEDE). Gly residues predominate over residues 51–64 (CGEGGGSALGPGPG). Positions 77–125 (TAEQILQHMVECIREVNEVIQNPATITRILLSHFNWDKEKLMERYFDGN) are UBA-like. A TRIAD supradomain region spans residues 154-365 (LDMPCQICYL…SAWYNCNRYN (212 aa)). Cysteine 158, cysteine 161, cysteine 175, histidine 177, cysteine 180, cysteine 183, cysteine 203, cysteine 208, cysteine 248, cysteine 253, cysteine 269, cysteine 271, cysteine 276, cysteine 279, histidine 284, cysteine 289, cysteine 316, and cysteine 319 together coordinate Zn(2+). Residues 158–208 (CQICYLNYPNSYFTGLECGHKFCMQCWGEYLTTKIIEEGMGQTISCPAHGC) form an RING-type 1 zinc finger. The IBR-type zinc finger occupies 228 to 289 (LKYQHLITNS…GENWHDPVKC (62 aa)). The RING-type 2; atypical zinc finger occupies 316-347 (CPKCHVTIEKDGGCNHMVCRNQNCKAEFCWVC). The active site involves cysteine 329. 6 residues coordinate Zn(2+): cysteine 334, cysteine 339, cysteine 344, cysteine 347, histidine 354, and cysteine 361. The tract at residues 380–529 (RAALQRYLFY…EKDLWEYIED (150 aa)) is ariadne domain.

Belongs to the RBR family. Ariadne subfamily. In terms of assembly, interacts (via the first RING-type zinc finger) with ube2l3. Associates with cullin-RING ubiquitin ligase (CRL) complexes containing neddylated cullin.

It is found in the cytoplasm. It localises to the nucleus. The catalysed reaction is [E2 ubiquitin-conjugating enzyme]-S-ubiquitinyl-L-cysteine + [acceptor protein]-L-lysine = [E2 ubiquitin-conjugating enzyme]-L-cysteine + [acceptor protein]-N(6)-ubiquitinyl-L-lysine.. The protein operates within protein modification; protein ubiquitination. Autoinhibited by the ariadne domain, which masks the second RING-type zinc finger that contains the active site and inhibits the E3 activity. Inhibition is relieved upon binding to neddylated cullin-RING ubiquitin ligase complexes, which activate the E3 ligase activity of ARIH1. In terms of biological role, E3 ubiquitin-protein ligase, which catalyzes ubiquitination of target proteins together with ubiquitin-conjugating enzyme E2 ube2l3. Acts as an atypical E3 ubiquitin-protein ligase by working together with cullin-RING ubiquitin ligase (CRL) complexes and initiating ubiquitination of CRL substrates: associates with CRL complexes and specifically mediates addition of the first ubiquitin on CRLs targets. The initial ubiquitin is then elongated. E3 ubiquitin-protein ligase activity is activated upon binding to neddylated cullin-RING ubiquitin ligase complexes. This Xenopus laevis (African clawed frog) protein is E3 ubiquitin-protein ligase arih1 (arih1).